The chain runs to 325 residues: Tryptophan--tRNA ligase (325 aa).

ATP contacts are provided by residues 9 to 11 and 17 to 18; these read QPS and GN. The short motif at 10–18 is the 'HIGH' region element; it reads PSGILHIGN. D132 contributes to the L-tryptophan binding site. ATP contacts are provided by residues 144 to 146, V184, and 191 to 195; these read GKD and KMSKS. The short motif at 191-195 is the 'KMSKS' region element; the sequence is KMSKS.

The protein belongs to the class-I aminoacyl-tRNA synthetase family. In terms of assembly, homodimer.

The protein resides in the cytoplasm. It carries out the reaction tRNA(Trp) + L-tryptophan + ATP = L-tryptophyl-tRNA(Trp) + AMP + diphosphate + H(+). In terms of biological role, catalyzes the attachment of tryptophan to tRNA(Trp). This is Tryptophan--tRNA ligase from Fusobacterium nucleatum subsp. nucleatum (strain ATCC 25586 / DSM 15643 / BCRC 10681 / CIP 101130 / JCM 8532 / KCTC 2640 / LMG 13131 / VPI 4355).